The chain runs to 250 residues: 7-cyano-7-deazaguanine synthase (250 aa).

21-31 (FSGGQDSSVCL) lines the ATP pocket. C209, C224, C227, and C230 together coordinate Zn(2+).

This sequence belongs to the QueC family. Zn(2+) serves as cofactor.

The enzyme catalyses 7-carboxy-7-deazaguanine + NH4(+) + ATP = 7-cyano-7-deazaguanine + ADP + phosphate + H2O + H(+). It participates in purine metabolism; 7-cyano-7-deazaguanine biosynthesis. Functionally, catalyzes the ATP-dependent conversion of 7-carboxy-7-deazaguanine (CDG) to 7-cyano-7-deazaguanine (preQ(0)). The protein is 7-cyano-7-deazaguanine synthase of Caulobacter sp. (strain K31).